The chain runs to 2789 residues: Testis-expressed protein 15 (2789 aa).

Over residues 34 to 46 (HNNTGSSTVTTSK) the composition is skewed to polar residues. 5 disordered regions span residues 34-99 (HNNT…SSEV), 169-191 (ENQN…AYTK), 1063-1166 (FSSK…EHQP), 2303-2331 (KNIS…DTTV), and 2351-2379 (KATF…DSLK). Residues 47-59 (SIKDPRLMRREES) show a composition bias toward basic and acidic residues. Positions 80–98 (DNVNSEIKSTPSNSASSSE) are enriched in polar residues. Over residues 170–179 (NQNHSEEKAQ) the composition is skewed to basic and acidic residues. Basic residues predominate over residues 1063–1077 (FSSKRKYDKRRKKRA). 2 stretches are compositionally biased toward low complexity: residues 1106–1116 (RKSMASSVSKS) and 1134–1160 (SQLP…NPSL).

It belongs to the TEX15 family. In terms of assembly, interacts with PIWIL4 and PIWIL2. In terms of tissue distribution, expressed in testis, predominantly in germ cells. Low expression, if any, in ovary. Also expressed in several cancers.

It is found in the cytoplasm. The protein resides in the nucleus. In terms of biological role, required during spermatogenesis for normal chromosome synapsis and meiotic recombination in germ cells. Necessary for formation of DMC1 and RAD51 foci on meiotic chromosomes, suggesting a specific role in DNA double-stranded break repair. Essential executor of PIWIL4-piRNA pathway directed transposon DNA methylation and silencing in the male embryonic germ cells. PIWIL4-piRNA binds to nascent transposon transcripts and interacts with TEX15, which may in turn recruit the epigenetic silencing machinery to the transposon loci. Not required for piRNA biosynthesis. This chain is Testis-expressed protein 15 (TEX15), found in Homo sapiens (Human).